The chain runs to 261 residues: Aquaporin-8 (261 aa).

The Cytoplasmic segment spans residues 1–36 (MSGETPMCSIDLSEVKAKETRMAGRFRVSWYEQYIQ). Residues 37–57 (PCVVELLGSALFIFIGCLSVI) traverse the membrane as a helical segment. Cysteine persulfide is present on Cys53. Cys53 is subject to Cysteine sulfenic acid (-SOH). The Extracellular portion of the chain corresponds to 58-84 (ENSPDTGLLQPALAHGLALGLIIATLG). The helical transmembrane segment at 85–105 (NISGGHFNPAVSLAVTVIGGL) threads the bilayer. The NPA 1 motif lies at 92–94 (NPA). Over 106–107 (KT) the chain is Cytoplasmic. A helical membrane pass occupies residues 108–128 (MLLIPYWISQIFGGLIGAALA). Over 129-156 (KVVSPEERFWNASGAAFAIVQEQEQVTE) the chain is Extracellular. N-linked (GlcNAc...) asparagine glycosylation occurs at Asn139. The chain crosses the membrane as a helical span at residues 157-177 (ALGVEIILTILLVLAVCMGAV). Topologically, residues 178–183 (NEKTMG) are cytoplasmic. A helical transmembrane segment spans residues 184–204 (PLAPFSIGFSVIVDILAGGGI). Residues 205–228 (SGACMNPARAFGPAVVAGYWDFHW) lie on the Extracellular side of the membrane. An NPA 2 motif is present at residues 210-212 (NPA). Residues 229 to 249 (IYWLGPLLAGLFVGLLIRLFI) form a helical membrane-spanning segment. Over 250 to 261 (GDEKTRLILKSR) the chain is Cytoplasmic.

Belongs to the MIP/aquaporin (TC 1.A.8) family. In terms of processing, sulfenylation at Cys-53(C53-SOH) when hydrogen peroxide flows through the AQP8 channel, making it susceptible to hydrogen sulfide produced by CBS. Persulfidation at Cys-53 is required to gate AQP8 channel; under stress condition, hydrogen peroxide accumulates in the cell leading to CBS activation that produces hydrogen sulfide inducing persulfidation of oxidized Cys-53 (C53-SOH). Post-translationally, N-glycosylated.

Its subcellular location is the cell membrane. The protein resides in the mitochondrion inner membrane. It localises to the apical cell membrane. The protein localises to the basolateral cell membrane. It is found in the smooth endoplasmic reticulum membrane. The catalysed reaction is H2O(in) = H2O(out). It carries out the reaction H2O2(out) = H2O2(in). The enzyme catalyses formamide(out) = formamide(in). It catalyses the reaction methylamine(out) = methylamine(in). With respect to regulation, reversibly gated by a two-step sulfenylation-persulfidation process in cells undergoing diverse stresses. Channel that allows the facilitated permeation of water and uncharged molecules, such as hydrogen peroxide and the neutral form of ammonia (NH3), through cellular membranes such as plasma membrane, inner mitochondrial membrane and endoplasmic reticulum membrane of several tissues. The transport of ammonia neutral form induces a parallel transport of proton, at alkaline pH when the concentration of ammonia is high. However, it is unclear whether the transport of proton takes place via the aquaporin or via an endogenous pathway. Also, may transport ammonia analogs such as formamide and methylamine, a transport favourited at basic pH due to the increase of unprotonated (neutral) form, which is expected to favor diffusion. Does not transport urea or glycerol. The water transport mechanism is mercury- and copper-sensitive and passive in response to osmotic driving forces. At the canicular plasma membrane, mediates the osmotic transport of water toward the bile canaliculus and facilitates the cAMP-induced bile canalicular water secretion, a process involved in bile formation. In addition, mediates the hydrogen peroxide release from hepatocyte mitochondria that modulates the SREBF2-mediated cholesterol synthesis and facilitates the mitochondrial ammonia uptake which is metabolized into urea, mainly under glucagon stimulation. In B cells, transports the CYBB-generated hydrogen peroxide from the external leaflet of the plasma membrane to the cytosol to promote B cell activation and differentiation for signal amplification. In the small intestine and colon system, mediates water transport through mitochondria and apical membrane of epithelial cells. May play an important role in the adaptive response of proximal tubule cells to acidosis possibly facilitating mitochondrial ammonia transport. In Notomys alexis (Spinifex hopping mouse), this protein is Aquaporin-8.